We begin with the raw amino-acid sequence, 240 residues long: MRPSGRAVDSLRSIVLEPGYSKHAEGSCMARFGDTHVLCTASIEERVPGWMRGGGKGWVTAEYGMLPRSTHTRTDREAARGRQSGRTQEIQRLIGRSLRSVTDLKKIGEIQIRLDCDVIQADGGTRTAAITGSWVALYQALARFEKLGLGALPPLTDHVAAVSCGLCDGVAVLDLDYAEDSTAQADANFVLTGTGGIVEIQGTAETSPFAQAQFMELLALAQKGITELVALQKAALASLR.

Residues Arg-86 and 124–126 (GTR) contribute to the phosphate site.

The protein belongs to the RNase PH family. As to quaternary structure, homohexameric ring arranged as a trimer of dimers.

It carries out the reaction tRNA(n+1) + phosphate = tRNA(n) + a ribonucleoside 5'-diphosphate. In terms of biological role, phosphorolytic 3'-5' exoribonuclease that plays an important role in tRNA 3'-end maturation. Removes nucleotide residues following the 3'-CCA terminus of tRNAs; can also add nucleotides to the ends of RNA molecules by using nucleoside diphosphates as substrates, but this may not be physiologically important. Probably plays a role in initiation of 16S rRNA degradation (leading to ribosome degradation) during starvation. The protein is Ribonuclease PH of Rhodospirillum rubrum (strain ATCC 11170 / ATH 1.1.1 / DSM 467 / LMG 4362 / NCIMB 8255 / S1).